The following is a 249-amino-acid chain: Elongation factor Ts (249 aa).

The tract at residues 82–85 (TDFV) is involved in Mg(2+) ion dislocation from EF-Tu. The tract at residues 215 to 249 (QAGQLAPEAESTTETADATSETTTEKSSAKKKKKK) is disordered. Over residues 222–236 (EAESTTETADATSET) the composition is skewed to low complexity.

It belongs to the EF-Ts family.

Its subcellular location is the cytoplasm. Functionally, associates with the EF-Tu.GDP complex and induces the exchange of GDP to GTP. It remains bound to the aminoacyl-tRNA.EF-Tu.GTP complex up to the GTP hydrolysis stage on the ribosome. The polypeptide is Elongation factor Ts (Rippkaea orientalis (strain PCC 8801 / RF-1) (Cyanothece sp. (strain PCC 8801))).